The chain runs to 116 residues: Galanin-like peptide (116 aa).

An N-terminal signal peptide occupies residues 1–24 (MAPPSVPLVLLLVLLLSLAETPAS). Positions 87-116 (NVMETFAKPEIGDLGMLSMKIPKEEDVLKS) are excised as a propeptide.

This sequence belongs to the galanin family. In terms of tissue distribution, isoform 2 is found in ganglia of ganglioneuroma and ganglioneuroblastoma, as well as in differentiated tumor cells of neuroblastoma tissues. Not found in undifferentiated neuroblasts. Isoform 2 is found in the skin, in pericytes covering microvascular arterioles and venules on their abluminal surfaces. In larger vessels, isoform 2 is expressed in layers of smooth muscle cells. Isoform 2 is not detected in endothelial cells.

It localises to the secreted. Functionally, hypothalamic neuropeptide which binds to the G-protein-coupled galanin receptors (GALR1, GALR2 and GALR3). Involved in a large number of putative physiological functions in CNS homeostatic processes, including the regulation of gonadotropin-releasing hormone secretion. In terms of biological role, exhibits potent and dose-dependent vasoconstrictor and anti-edema activity in the cutaneous microvasculature, a physiologic effects which does not appear to be mediated via GALR1 or GALR2. Exhibits antimicrobial activity against Gram-negative bacterias, inducing bacterial membrane blebbing. This Homo sapiens (Human) protein is Galanin-like peptide (GALP).